The primary structure comprises 133 residues: Putative nickel-responsive regulator (133 aa).

Ni(2+) is bound by residues His-74, His-85, His-87, and Cys-93.

Belongs to the transcriptional regulatory CopG/NikR family. Ni(2+) is required as a cofactor.

In terms of biological role, transcriptional regulator. The sequence is that of Putative nickel-responsive regulator from Saccharolobus islandicus (strain Y.N.15.51 / Yellowstone #2) (Sulfolobus islandicus).